Here is a 104-residue protein sequence, read N- to C-terminus: UPF0473 protein SH1304 (104 aa).

This sequence belongs to the UPF0473 family.

This chain is UPF0473 protein SH1304, found in Staphylococcus haemolyticus (strain JCSC1435).